The primary structure comprises 70 residues: Venom antimicrobial peptide-6 (70 aa).

Positions 1–23 (MKSQTFFLLFLVVFLLAITQSEA) are cleaved as a signal peptide. Position 36 is a phenylalanine amide (phenylalanine 36). Residues 40-70 (SLRDMDTMKYLYDPSLSAADLKTLQKLMENY) constitute a propeptide that is removed on maturation.

This sequence belongs to the non-disulfide-bridged peptide (NDBP) superfamily. Short antimicrobial peptide (group 4) family. As to expression, expressed by the venom gland.

The protein resides in the secreted. It is found in the target cell membrane. Functionally, amphipathic peptide that exhibits extensive cytolytic activities against both prokaryotic and eukaryotic cells. Is more potent against Gram-positive bacteria (lethal concentration (LC)=0.25-2.9 uM) than against Gram-negative bacteria (LC=6.2-&gt;50 uM), and fungi ((LC)=14.1-&gt;50 uM). Shows hemolytic activity against rabbit erythrocytes (37.7% of inhibition at 6.25 uM) and cytolysis against rat dorsal root ganglions. In vivo, intravenous injection into mice tail provokes uncomfortable symptoms with a death rate of 12.5%. This is Venom antimicrobial peptide-6 from Mesobuthus eupeus (Lesser Asian scorpion).